The following is a 44-amino-acid chain: Photosystem II reaction center protein K (44 aa).

A propeptide spanning residues 1-7 is cleaved from the precursor; sequence MTTLLLA. A helical membrane pass occupies residues 19 to 39; the sequence is IVDVLPVIPLLFLLLAFVWQA.

This sequence belongs to the PsbK family. As to quaternary structure, PSII is composed of 1 copy each of membrane proteins PsbA, PsbB, PsbC, PsbD, PsbE, PsbF, PsbH, PsbI, PsbJ, PsbK, PsbL, PsbM, PsbT, PsbX, PsbY, PsbZ, Psb30/Ycf12, at least 3 peripheral proteins of the oxygen-evolving complex and a large number of cofactors. It forms dimeric complexes.

The protein localises to the plastid. It is found in the chloroplast thylakoid membrane. Its function is as follows. One of the components of the core complex of photosystem II (PSII). PSII is a light-driven water:plastoquinone oxidoreductase that uses light energy to abstract electrons from H(2)O, generating O(2) and a proton gradient subsequently used for ATP formation. It consists of a core antenna complex that captures photons, and an electron transfer chain that converts photonic excitation into a charge separation. This chain is Photosystem II reaction center protein K, found in Tupiella akineta (Green alga).